Here is a 127-residue protein sequence, read N- to C-terminus: Fumarate reductase subunit C (127 aa).

Helical transmembrane passes span 30–50, 67–87, and 107–127; these read ATIL…GSLV, IVVA…QTFF, and VVVL…LVIV.

It belongs to the FrdC family. Part of an enzyme complex containing four subunits: a flavoprotein (FrdA), an iron-sulfur protein (FrdB), and two hydrophobic anchor proteins (FrdC and FrdD).

Its subcellular location is the cell inner membrane. Anchors the catalytic components of the fumarate reductase complex to the cell membrane, binds quinones. This chain is Fumarate reductase subunit C, found in Aliivibrio salmonicida (strain LFI1238) (Vibrio salmonicida (strain LFI1238)).